The following is an 85-amino-acid chain: U4-theraphotoxin-Hhn1a (85 aa).

Positions 1 to 22 are cleaved as a signal peptide; the sequence is MKVTLIAILTCAAVLVLHTTAE. Residues 23 to 48 constitute a propeptide that is removed on maturation; that stretch reads EELEAESQLMEVGMPDTELAAVDEER. 3 disulfides stabilise this stretch: cysteine 52–cysteine 66, cysteine 56–cysteine 77, and cysteine 71–cysteine 82.

This sequence belongs to the neurotoxin 12 (Hwtx-2) family. 02 (Hwtx-2) subfamily. In terms of assembly, monomer. Expressed by the venom gland.

It is found in the secreted. In terms of biological role, neurotoxin active on both insects and mammals. This chain is U4-theraphotoxin-Hhn1a, found in Cyriopagopus hainanus (Chinese bird spider).